Here is a 543-residue protein sequence, read N- to C-terminus: Secreted effector protein SptP (543 aa).

Positions 35-139 (TDKAYVAPEK…FINLIKNKDN (105 aa)) are chaperone-binding. One can recognise a Bacterial Rho-GAP domain in the interval 162–293 (DVGAESKQPL…TAELEKIKAG (132 aa)). The 229-residue stretch at 315–543 (IPINQQTQVK…QAQLLMTTAS (229 aa)) folds into the Tyrosine-protein phosphatase domain. Residue cysteine 481 is the Phosphocysteine intermediate of the active site.

In terms of assembly, forms a complex with SicP.

Its subcellular location is the secreted. It is found in the host cytoplasm. The enzyme catalyses O-phospho-L-tyrosyl-[protein] + H2O = L-tyrosyl-[protein] + phosphate. Functionally, effector proteins function to alter host cell physiology and promote bacterial survival in host tissues. This protein includes tyrosine phosphatase and GTPase activating protein (GAP) activities. After bacterial internalization, GAP mediates the reversal of the cytoskeletal changes induced by SopE. This function is independent of its tyrosine phosphatase activity, which remains unclear. In Salmonella typhi, this protein is Secreted effector protein SptP (sptP).